Here is a 289-residue protein sequence, read N- to C-terminus: Pyridoxal kinase PdxY (289 aa).

Substrate-binding positions include serine 9 and 44 to 45 (TQ). Residues aspartate 112, alanine 144, glutamate 149, lysine 183, and 210-213 (RPLV) contribute to the ATP site. Aspartate 225 serves as a coordination point for substrate.

Belongs to the pyridoxine kinase family. PdxY subfamily. As to quaternary structure, homodimer. The cofactor is Mg(2+).

It carries out the reaction pyridoxal + ATP = pyridoxal 5'-phosphate + ADP + H(+). The protein operates within cofactor metabolism; pyridoxal 5'-phosphate salvage; pyridoxal 5'-phosphate from pyridoxal: step 1/1. In terms of biological role, pyridoxal kinase involved in the salvage pathway of pyridoxal 5'-phosphate (PLP). Catalyzes the phosphorylation of pyridoxal to PLP. This is Pyridoxal kinase PdxY from Proteus mirabilis.